The following is a 324-amino-acid chain: MKPSVILYKALPDDLLQRLQEHFTVHQVANLSPQTVEQNAAIFAEAEGLLGSNENVDAALLEKMPKLRATSTISVGYDNFDVDALTARKILLMHTPTVLTETVADTLMALVLSTARRVVEVAERVKAGEWTASIGPDWYGTDVHHKTLGIVGMGRIGMALAQRAHFGFNMPILYNARRHHKEAEERFNARYCNLDTLLQESDFVCLILPLTDETHHLFGAEQFAKMKSSAIFINAGRGPVVDENALIAALQKGEIHAAGLDVFEQEPLSVDSPLLSMANVVAVPHIGSATHETRYGMAACAVDNLIDALQGKVEKNCVNPHVAD.

Active-site residues include Arg-237 and Glu-266. Catalysis depends on His-285, which acts as the Proton donor.

This sequence belongs to the D-isomer specific 2-hydroxyacid dehydrogenase family. GhrB subfamily. Homodimer.

It localises to the cytoplasm. The enzyme catalyses glycolate + NADP(+) = glyoxylate + NADPH + H(+). The catalysed reaction is (R)-glycerate + NAD(+) = 3-hydroxypyruvate + NADH + H(+). It catalyses the reaction (R)-glycerate + NADP(+) = 3-hydroxypyruvate + NADPH + H(+). Its function is as follows. Catalyzes the NADPH-dependent reduction of glyoxylate and hydroxypyruvate into glycolate and glycerate, respectively. This Escherichia coli O6:H1 (strain CFT073 / ATCC 700928 / UPEC) protein is Glyoxylate/hydroxypyruvate reductase B.